The chain runs to 976 residues: Ephrin type-A receptor 1 (976 aa).

The signal sequence occupies residues 1-25; it reads MERRWPLGLGLVLLLCAPLPPGARA. The Extracellular portion of the chain corresponds to 26–547; it reads KEVTLMDTSK…PVSRGLTGGE (522 aa). Residues 27–209 enclose the Eph LBD domain; the sequence is EVTLMDTSKA…FYQRCPETLN (183 aa). Fibronectin type-III domains follow at residues 332-445 and 447-538; these read PPSA…MGHA and SLSG…TSPP. N-linked (GlcNAc...) asparagine glycosylation is present at asparagine 414. A helical membrane pass occupies residues 548–568; the sequence is IVAVIFGLLLGAALLLGILVF. The Cytoplasmic segment spans residues 569-976; it reads RSRRAQRQRQ…ILCSIQGFKD (408 aa). Tyrosine 599 and tyrosine 605 each carry phosphotyrosine; by autocatalysis. A Protein kinase domain is found at 624–884; sequence LMVDTVIGEG…KLQAHLEQLL (261 aa). ATP-binding positions include 630–638 and lysine 656; that span reads IGEGEFGEV. Aspartate 749 (proton acceptor) is an active-site residue. At tyrosine 781 the chain carries Phosphotyrosine; by autocatalysis. Residues serine 906 and serine 910 each carry the phosphoserine modification. Residues 913 to 976 enclose the SAM domain; the sequence is IPYRTVSEWL…ILCSIQGFKD (64 aa). Position 930 is a phosphotyrosine; by autocatalysis (tyrosine 930). Positions 974–976 match the PDZ-binding motif; the sequence is FKD.

It belongs to the protein kinase superfamily. Tyr protein kinase family. Ephrin receptor subfamily. Homodimer. Forms a signaling complex with LCK; PTK2B/PYK2 and PI3-kinase upon activation by EFNA1; regulates T-lymphocytes migration. Interacts (via SAM domain) with ILK (via ANK repeats); stimulated by EFNA1 but independent of the kinase activity of EPHA1. Interacts (kinase activity-dependent) with PTK2/FAK1. In terms of processing, phosphorylated. Autophosphorylation is stimulated by its ligand EFNA1. Ubiquitinated. Overexpressed in several carcinomas.

Its subcellular location is the cell membrane. It catalyses the reaction L-tyrosyl-[protein] + ATP = O-phospho-L-tyrosyl-[protein] + ADP + H(+). In terms of biological role, receptor tyrosine kinase which binds promiscuously membrane-bound ephrin-A family ligands residing on adjacent cells, leading to contact-dependent bidirectional signaling into neighboring cells. The signaling pathway downstream of the receptor is referred to as forward signaling while the signaling pathway downstream of the ephrin ligand is referred to as reverse signaling. Binds with a low affinity EFNA3 and EFNA4 and with a high affinity to EFNA1 which most probably constitutes its cognate/functional ligand. Upon activation by EFNA1 induces cell attachment to the extracellular matrix inhibiting cell spreading and motility through regulation of ILK and downstream RHOA and RAC. Also plays a role in angiogenesis and regulates cell proliferation. May play a role in apoptosis. This is Ephrin type-A receptor 1 (EPHA1) from Homo sapiens (Human).